A 486-amino-acid chain; its full sequence is Adenosylhomocysteinase (486 aa).

Residues Thr-63, Asp-147, and Glu-209 each contribute to the substrate site. Residue 210 to 212 (TTT) participates in NAD(+) binding. Positions 239 and 243 each coordinate substrate. NAD(+) is bound by residues Asn-244, 273-278 (GYGDVG), Glu-296, Asn-331, 352-354 (IGH), and Asn-400.

It belongs to the adenosylhomocysteinase family. NAD(+) is required as a cofactor.

It catalyses the reaction S-adenosyl-L-homocysteine + H2O = L-homocysteine + adenosine. It participates in amino-acid biosynthesis; L-homocysteine biosynthesis; L-homocysteine from S-adenosyl-L-homocysteine: step 1/1. Functionally, adenosylhomocysteine is a competitive inhibitor of S-adenosyl-L-methionine-dependent methyl transferase reactions; therefore adenosylhomocysteinase may play a key role in the control of methylations via regulation of the intracellular concentration of adenosylhomocysteine. The chain is Adenosylhomocysteinase from Trichomonas vaginalis.